The chain runs to 173 residues: Macro domain-containing protein in gbd 3'region (173 aa).

The Macro domain maps to 1–173; that stretch reads MSGEHLQVVH…NYRLYRERLS (173 aa).

Belongs to the MacroD-type family.

This Cupriavidus necator (Alcaligenes eutrophus) protein is Macro domain-containing protein in gbd 3'region.